The sequence spans 131 residues: Large ribosomal subunit protein uL22 (131 aa).

Positions 1–11 (MAKGHRSKIKR) are enriched in basic residues. Residues 1–20 (MAKGHRSKIKRERNEVRDTR) are disordered.

It belongs to the universal ribosomal protein uL22 family. In terms of assembly, part of the 50S ribosomal subunit.

In terms of biological role, this protein binds specifically to 23S rRNA; its binding is stimulated by other ribosomal proteins, e.g. L4, L17, and L20. It is important during the early stages of 50S assembly. It makes multiple contacts with different domains of the 23S rRNA in the assembled 50S subunit and ribosome. Its function is as follows. The globular domain of the protein is located near the polypeptide exit tunnel on the outside of the subunit, while an extended beta-hairpin is found that lines the wall of the exit tunnel in the center of the 70S ribosome. This Agathobacter rectalis (strain ATCC 33656 / DSM 3377 / JCM 17463 / KCTC 5835 / VPI 0990) (Eubacterium rectale) protein is Large ribosomal subunit protein uL22.